The following is a 386-amino-acid chain: Acetylornithine aminotransferase (386 aa).

Pyridoxal 5'-phosphate-binding positions include 94-95 (GT) and phenylalanine 121. Position 124 (arginine 124) interacts with N(2)-acetyl-L-ornithine. 206 to 209 (DEVQ) is a pyridoxal 5'-phosphate binding site. Lysine 235 carries the N6-(pyridoxal phosphate)lysine modification. Residue serine 263 coordinates N(2)-acetyl-L-ornithine. Threonine 264 is a binding site for pyridoxal 5'-phosphate.

Belongs to the class-III pyridoxal-phosphate-dependent aminotransferase family. ArgD subfamily. In terms of assembly, homodimer. Requires pyridoxal 5'-phosphate as cofactor.

Its subcellular location is the cytoplasm. The enzyme catalyses N(2)-acetyl-L-ornithine + 2-oxoglutarate = N-acetyl-L-glutamate 5-semialdehyde + L-glutamate. Its pathway is amino-acid biosynthesis; L-arginine biosynthesis; N(2)-acetyl-L-ornithine from L-glutamate: step 4/4. This chain is Acetylornithine aminotransferase, found in Listeria monocytogenes serovar 1/2a (strain ATCC BAA-679 / EGD-e).